A 416-amino-acid polypeptide reads, in one-letter code: Tiggy-winkle hedgehog protein (416 aa).

Residues 1 to 26 form the signal peptide; the sequence is MDVRLHLKQFALLCFISLLLTPCGLA. A lipid anchor (N-palmitoyl cysteine) is attached at C27. Positions 92, 93, 98, 128, 129, 132, and 134 each coordinate Ca(2+). Zn(2+) is bound by residues H143, D150, and H185. G200 carries the Cholesterol glycine ester lipid modification.

Belongs to the hedgehog family. Multimer. As to quaternary structure, interacts with HHATL/GUP1 which negatively regulates HHAT-mediated palmitoylation of the TWHH N-terminus. Interacts with BOC and CDON. Interacts with HHIP. Interacts with DISP1 via its cholesterol anchor. Interacts with SCUBE2. In terms of processing, the C-terminal domain displays an autoproteolysis activity and a cholesterol transferase activity. Both activities result in the cleavage of the full-length protein into two parts (N-product and C-product) followed by the covalent attachment of a cholesterol moiety to the C-terminal of the newly generated N-product. Cholesterylation is required for the tiggy-winkle hedgehog protein N-product targeting to lipid rafts and multimerization. N-product is the active species in both local and long-range signaling, whereas the C-product is degraded in the endoplasmic reticulum. Post-translationally, N-palmitoylation by HHAT of N-product is required for tiggy-winkle hedgehog protein N-product multimerization and full activity. It is a prerequisite for the membrane-proximal positioning and the subsequent shedding of this N-terminal peptide. The lipidated N- and C-terminal peptides of N-product can be cleaved (shedding). The N-terminal palmitoylated peptide is cleaved at the Cardin-Weintraub (CW) motif site. The cleavage reduced the interactions with heparan sulfate. The cleavage is enhanced by SCUBE2. In terms of tissue distribution, expressed in the ventral midline of the neural tube and brain. In the developing brain, expression occurs in domains that include a discrete region in the floor of the diencephalon. Not detected in the notochord or developing fin bud.

It localises to the cell membrane. The protein resides in the endoplasmic reticulum membrane. Its subcellular location is the golgi apparatus membrane. Functionally, the C-terminal part of the tiggy-winkle hedgehog protein precursor displays an autoproteolysis and a cholesterol transferase activity. Both activities result in the cleavage of the full-length protein into two parts (N-product and C-product) followed by the covalent attachment of a cholesterol moiety to the C-terminal of the newly generated N-product. Both activities occur in the endoplasmic reticulum. Once cleaved, the C-product is degraded in the endoplasmic reticulum. In terms of biological role, the dually lipidated tiggy-winkle hedgehog protein N-product is a morphogen which is essential for a variety of patterning events during development. Involved in dorso-ventral patterning of the brain and in early patterning of the developing eyes. Binds to the patched (PTCH1) receptor, which functions in association with smoothened (SMO), to activate the transcription of target genes. The chain is Tiggy-winkle hedgehog protein (shhb) from Danio rerio (Zebrafish).